The sequence spans 371 residues: Protein lifeguard 1 (371 aa).

The segment at 1–145 (MSHEKSFLVS…EGPPSYYDNQ (145 aa)) is disordered. A compositionally biased stretch (pro residues) spans 14–49 (YPPPNPGYPGGPQPPMPPYAQPPYPGAPYPQPPFQP). Residues 84–98 (YPQEGYPQGPYPQGG) are compositionally biased toward low complexity. Positions 102 to 114 (GPYPQSPFPPNPY) are enriched in pro residues. The next 7 helical transmembrane spans lie at 165 to 185 (VFLV…VFTF), 197 to 217 (VWTY…LSCC), 228 to 248 (LVAL…IASF), 253 to 273 (AVIM…IFSM), 283 to 303 (MGVL…CIFI), 307 to 327 (ILEI…LAVD), and 346 to 366 (FAAL…LTII).

The protein belongs to the BI1 family. LFG subfamily.

The protein resides in the membrane. In terms of biological role, potential apoptotic regulator. This is Protein lifeguard 1 (GRINA) from Homo sapiens (Human).